Here is a 123-residue protein sequence, read N- to C-terminus: UPF0102 protein CLK_1817 (123 aa).

The protein belongs to the UPF0102 family.

The chain is UPF0102 protein CLK_1817 from Clostridium botulinum (strain Loch Maree / Type A3).